The primary structure comprises 865 residues: Xylosyltransferase 2 (865 aa).

At 1–15 the chain is on the cytoplasmic side; it reads MVASARVQKLVRRYK. A helical; Signal-anchor for type II membrane protein transmembrane segment spans residues 16-36; that stretch reads LAIATALAILLLQGLVVWSFS. Over 37–865 the chain is Lumenal; sequence GLEEDEAGEK…GPVKADGRLR (829 aa). The tract at residues 41 to 157 is disordered; that stretch reads DEAGEKGRQR…EGAPQPTDNG (117 aa). The segment covering 53–65 has biased composition (basic and acidic residues); sequence RPLDPGEGSKDTD. The span at 73–82 shows a compositional bias: basic residues; the sequence is STGRRHGRWR. A glycan (N-linked (GlcNAc...) asparagine) is linked at Asn-122. Residues 125-137 are compositionally biased toward low complexity; that stretch reads GAAAGEALVGAAG. Cystine bridges form between Cys-162-Cys-190, Cys-206-Cys-448, Cys-467-Cys-480, and Cys-469-Cys-478. UDP-alpha-D-xylose contacts are provided by residues Val-239, Asp-267, and 296–298; that span reads TIW. The N-linked (GlcNAc...) asparagine glycan is linked to Asn-327. 400-401 serves as a coordination point for UDP-alpha-D-xylose; that stretch reads DW. Residues Ser-481 and 504 to 505 contribute to the UDP-alpha-D-xylose site; that span reads RK. Intrachain disulfides connect Cys-581–Cys-833 and Cys-826–Cys-839. Asn-683 carries N-linked (GlcNAc...) asparagine glycosylation. The disordered stretch occupies residues 846–865; sequence SLSPDPKSELGPVKADGRLR.

The protein belongs to the glycosyltransferase 14 family. XylT subfamily. As to quaternary structure, monomer. It depends on Mg(2+) as a cofactor. Requires Mn(2+) as cofactor. Contains disulfide bonds. In terms of tissue distribution, widely expressed. Expressed at higher level in kidney and pancreas.

The protein localises to the golgi apparatus membrane. It is found in the secreted. The catalysed reaction is UDP-alpha-D-xylose + L-seryl-[protein] = 3-O-(beta-D-xylosyl)-L-seryl-[protein] + UDP + H(+). Its pathway is glycan metabolism; chondroitin sulfate biosynthesis. It functions in the pathway glycan metabolism; heparan sulfate biosynthesis. Catalyzes the first step in the biosynthesis of chondroitin sulfate, heparan sulfate and dermatan sulfate proteoglycans, such as DCN. Transfers D-xylose from UDP-D-xylose to specific serine residues of the core protein. This chain is Xylosyltransferase 2 (XYLT2), found in Homo sapiens (Human).